Reading from the N-terminus, the 659-residue chain is Beta-galactosidase BgaA (659 aa).

Substrate is bound at residue Arg-103. Cys-107 contributes to the Zn(2+) binding site. Residue Asn-141 participates in substrate binding. The active-site Proton donor is the Glu-142. 3 residues coordinate Zn(2+): Cys-148, Cys-150, and Cys-153. Glu-298 (nucleophile) is an active-site residue. A substrate-binding site is contributed by Trp-307.

It belongs to the glycosyl hydrolase 42 family. In terms of assembly, dimer.

It catalyses the reaction Hydrolysis of terminal non-reducing beta-D-galactose residues in beta-D-galactosides.. Inhibited by Cu(2+), Hg(2+) and Zn(2+). No effect with Ca(2+), Mg(2+), Mn(2+) or excess EDTA (10 mM). Its function is as follows. Involved in plant cell wall degradation in cooperation with cellulosome. Hydrolyzes both p-nitrophenyl-alpha-L-arabinopyranoside (pNPAp) and p-nitrophenyl-beta-D-galactopyranoside (pNPGp), with higher activity for pNPAp. Shows hydrolysis activity against p-nitrophenyl-beta-D-fucopyranoside (pNPFp), but not against p-nitrophenyl-alpha-L-arabinofuranoside (pNPAf), o-nitrophenyl-beta-D-galactopyranoside (oNPGp), p-nitrophenyl-beta-D-xylopyranoside (pNPXp), p-nitrophenyl-beta-D-glucopyranoside (pNPGLp), p-nitrophenyl-beta-D-cellobiopyranoside (pNPCp), p-nitrophenyl-beta-lactopyranoside (pNPLp) or p-nitrophenyl-alpha-galactopyranoside (pNPalphaGp). No detectable activity against arabinan or arabinoxylan, but activity against arabinogalactan can be detected. Increases degradation activity of alpha-L-arabinofuranosidase (ArfA) and endo-1,4-beta-xylanase (XynA) when corn fiber gum and corn stem powder are used as substrates. This is Beta-galactosidase BgaA (bgaA) from Clostridium cellulovorans (strain ATCC 35296 / DSM 3052 / OCM 3 / 743B).